The primary structure comprises 618 residues: Proline--tRNA ligase (618 aa).

The protein belongs to the class-II aminoacyl-tRNA synthetase family. ProS type 1 subfamily. Homodimer.

Its subcellular location is the cytoplasm. It carries out the reaction tRNA(Pro) + L-proline + ATP = L-prolyl-tRNA(Pro) + AMP + diphosphate. Functionally, catalyzes the attachment of proline to tRNA(Pro) in a two-step reaction: proline is first activated by ATP to form Pro-AMP and then transferred to the acceptor end of tRNA(Pro). As ProRS can inadvertently accommodate and process non-cognate amino acids such as alanine and cysteine, to avoid such errors it has two additional distinct editing activities against alanine. One activity is designated as 'pretransfer' editing and involves the tRNA(Pro)-independent hydrolysis of activated Ala-AMP. The other activity is designated 'posttransfer' editing and involves deacylation of mischarged Ala-tRNA(Pro). The misacylated Cys-tRNA(Pro) is not edited by ProRS. This Streptococcus pyogenes serotype M3 (strain ATCC BAA-595 / MGAS315) protein is Proline--tRNA ligase.